The sequence spans 147 residues: Mucoricin (147 aa).

Residues 4–143 (EEGRLFFIKS…VSANQRWELV (140 aa)) enclose the Ricin B-type lectin domain.

Belongs to the ribosome-inactivating protein family. Type 1 RIP subfamily.

The protein localises to the secreted. The catalysed reaction is Endohydrolysis of the N-glycosidic bond at one specific adenosine on the 28S rRNA.. N-glycosylase that inhibits protein synthesis in the host by depurinating ribosomal rRNA, and thus acts as a ribosomal inactivating protein (RIP). Promotes vascular permeability in the host and induces necrosis and apoptosis of host alveolar epithelial cells. The sequence is that of Mucoricin from Rhizopus delemar (strain RA 99-880 / ATCC MYA-4621 / FGSC 9543 / NRRL 43880) (Mucormycosis agent).